The sequence spans 1197 residues: MAGHEVRYGKHRTRRSFSRIKEVLDLPNLIEIQTDSFQDFLDSGLKEVFEDVLPISNFTDTMELEFVGYEFKEPKYTLEEARIHDASYSAPIFVTFRLVNKETGEIKTQEVFFGDFPIMTEMGTFIINGGERIIVSQLVRSPGVYFNDKVDKNGKVGYGSTVIPNRGAWLELETDSKDIAYTRIDRTRKIPFTTLVRALGFSGDDEIVDIFGESDLVRNTIEKDIHKNPSDSRTDEALKEIYERLRPGEPKTADSSRSLLIARFFDARRYDLAAVGRYKVNKKLNIKTRLLNQIIAENLVDAETGEILVEAGTEMTRSVIESIEEHLDGDLNKFVYTPNDYAVVTEPVVLQKFKVVSPIDPDRVVTIVGNANPDDKVRALTPADILAEMSYFLNLAEGLGKVDDIDHLGNRRIRAVGELLANQFRIGLARMERNVRERMSVQDNDVLTPQQIINIRPVTAAVKEFFGSSQLSQFMDQHNPLSELSHKRRLSALGPGGLTRDRAGYEVRDVHYTHYGRMCPIETPEGPNIGLINNLSSFGHLNKYGFIQTPYRKVDRATGRVTNEIVWLTADEEDEYTVAQANSKLNEDGTFAEEIVMGRHQGNNQEFSASVVDFVDVSPKQVVAVATACIPFLENDDSNRALMGANMQRQAVPLIDPKAPYVGTGMEYQAAHDSGAAVIAQHNGKVVFSDAEKVEIRRQDGSLDVYHITKFRRSNSGTAYNQRTLVKVGDIVEKGDFIADGPSMENGEMALGQNPVVAYMTWEGYNFEDAVIMSERLVKEDVYTSVHLEEFESETRDTKLGPEEITREIPNVGEEALKDLDEMGIIRIGAEVKEGDILVGKVTPKGEKDLSAEERLLHAIFGDKSREVRDTSLRVPHGGDGIVRDVKIFTRANGDELQSGVNMLVRVYIAQKRKIKVGDKMAGRHGNKGVVSRIVPKGVVSRIVPVEDMPYLPDGTPVDIMLNPLGVPSRMNIGQVMELHLGMAARNLGIHIATPVFDGASSEDLWDTVREAGMDSDAKTVLYDGRTGEPFDNRVSVGVMYMIKLHHMVDDKLHARSVGPYSLVTQQPLGGKAQFGGQRFGEMEVWALEAYGASNVLQEILTYKSDDVTGRLKAYEAITKGKPIPKPGVPESFRVLVKELQSLGLDMRVLDEDDNEVELRDLDEGEDDDIMHVDDLEKAREKQAQETQEVSETTDEK.

This sequence belongs to the RNA polymerase beta chain family. In terms of assembly, the RNAP catalytic core consists of 2 alpha, 1 beta, 1 beta' and 1 omega subunit. When a sigma factor is associated with the core the holoenzyme is formed, which can initiate transcription.

It carries out the reaction RNA(n) + a ribonucleoside 5'-triphosphate = RNA(n+1) + diphosphate. Functionally, DNA-dependent RNA polymerase catalyzes the transcription of DNA into RNA using the four ribonucleoside triphosphates as substrates. The sequence is that of DNA-directed RNA polymerase subunit beta from Streptococcus pyogenes serotype M12 (strain MGAS9429).